The sequence spans 92 residues: MARTVNCVYLKKEAEGLGFQLYPGPLGKRIFDNVSKEAWGLWQAKQTMLINEKKLNMMNVEDRGFLETQMVNFLFEGKDVEIEGYVPQKDDD.

It belongs to the Fe(2+)-trafficking protein family.

Could be a mediator in iron transactions between iron acquisition and iron-requiring processes, such as synthesis and/or repair of Fe-S clusters in biosynthetic enzymes. This is Probable Fe(2+)-trafficking protein from Shewanella woodyi (strain ATCC 51908 / MS32).